The primary structure comprises 165 residues: MTNLSRGLLLLEDEDFTLVENQAKTFHLSHTVSGKYSIVMFYTDTCPQCSVLKPIVLYFVGDPLLQICLVNVYDSDSQNIIPMSLKSTTPLEYVPFIVFYVNGLPFKIFDGESTLLNFKNFILQTIQEADQIPTDTAAQQSEIPSYTLGKPKSSKVCYLTYEKAY.

Belongs to the IIV-6 196R family.

This is an uncharacterized protein from Invertebrate iridescent virus 3 (IIV-3).